The sequence spans 230 residues: dITP/XTP pyrophosphatase (230 aa).

7-12 serves as a coordination point for substrate; the sequence is STNPGK. Glu41 and Asp70 together coordinate Mg(2+). The active-site Proton acceptor is Asp70. Substrate is bound by residues Ser71, 181–184, Lys205, and 210–211; these read FGYD and HR.

Belongs to the HAM1 NTPase family. Homodimer. Mg(2+) is required as a cofactor.

It carries out the reaction XTP + H2O = XMP + diphosphate + H(+). It catalyses the reaction dITP + H2O = dIMP + diphosphate + H(+). The catalysed reaction is ITP + H2O = IMP + diphosphate + H(+). Pyrophosphatase that catalyzes the hydrolysis of nucleoside triphosphates to their monophosphate derivatives, with a high preference for the non-canonical purine nucleotides XTP (xanthosine triphosphate), dITP (deoxyinosine triphosphate) and ITP. Seems to function as a house-cleaning enzyme that removes non-canonical purine nucleotides from the nucleotide pool, thus preventing their incorporation into DNA/RNA and avoiding chromosomal lesions. This chain is dITP/XTP pyrophosphatase, found in Anaeromyxobacter sp. (strain Fw109-5).